The chain runs to 138 residues: ATP synthase epsilon chain (138 aa).

Belongs to the ATPase epsilon chain family. F-type ATPases have 2 components, CF(1) - the catalytic core - and CF(0) - the membrane proton channel. CF(1) has five subunits: alpha(3), beta(3), gamma(1), delta(1), epsilon(1). CF(0) has three main subunits: a, b and c.

It is found in the cell inner membrane. In terms of biological role, produces ATP from ADP in the presence of a proton gradient across the membrane. The sequence is that of ATP synthase epsilon chain from Psychrobacter arcticus (strain DSM 17307 / VKM B-2377 / 273-4).